Consider the following 269-residue polypeptide: Hydroxyethylthiazole kinase (269 aa).

Met45 contributes to the substrate binding site. 2 residues coordinate ATP: Arg121 and Thr167. Gly194 is a binding site for substrate.

Belongs to the Thz kinase family. Mg(2+) is required as a cofactor.

The catalysed reaction is 5-(2-hydroxyethyl)-4-methylthiazole + ATP = 4-methyl-5-(2-phosphooxyethyl)-thiazole + ADP + H(+). It participates in cofactor biosynthesis; thiamine diphosphate biosynthesis; 4-methyl-5-(2-phosphoethyl)-thiazole from 5-(2-hydroxyethyl)-4-methylthiazole: step 1/1. In terms of biological role, catalyzes the phosphorylation of the hydroxyl group of 4-methyl-5-beta-hydroxyethylthiazole (THZ). The sequence is that of Hydroxyethylthiazole kinase from Brevibacillus brevis (strain 47 / JCM 6285 / NBRC 100599).